The following is a 311-amino-acid chain: Olfactory receptor 1N1 (311 aa).

At 1-23 (MENQSSISEFFLRGISAPPEQQQ) the chain is on the extracellular side. N3 carries an N-linked (GlcNAc...) asparagine glycan. Residues 24–47 (SLFGIFLCMYLVTLTGNLLIILAI) form a helical membrane-spanning segment. Topologically, residues 48–55 (GSDLHLHT) are cytoplasmic. Residues 56–77 (PMYFFLANLSFVDMGLTSSTVT) form a helical membrane-spanning segment. Residues 78–98 (KMLVNIQTRHHTISYTGCLTQ) are Extracellular-facing. C95 and C187 form a disulfide bridge. The helical transmembrane segment at 99–118 (MYFFLMFGDLDSFFLAAMAY) threads the bilayer. At 119 to 137 (DRYVAICHPLCYSTVMRPQ) the chain is on the cytoplasmic side. A helical transmembrane segment spans residues 138–156 (VCALMLALCWVLTNIVALT). Residues 157 to 194 (HTFLMARLSFCVTGEIAHFFCDITPVLKLSCSDTHINE) are Extracellular-facing. A helical transmembrane segment spans residues 195 to 217 (MMVFVLGGTVLIVPFLCIVTSYI). Residues 218-234 (HIVPAILRVRTRGGVGK) are Cytoplasmic-facing. A helical transmembrane segment spans residues 235-257 (AFSTCSSHLCVVCVFYGTLFSAY). At 258–270 (LCPPSIASEEKDI) the chain is on the extracellular side. A helical membrane pass occupies residues 271–290 (AAAAMYTIVTPMLNPFIYSL). Residues 291-311 (RNKDMKGALKRLFSHRSIVSS) are Cytoplasmic-facing.

Belongs to the G-protein coupled receptor 1 family.

The protein localises to the cell membrane. Its function is as follows. Odorant receptor. The polypeptide is Olfactory receptor 1N1 (OR1N1) (Homo sapiens (Human)).